Consider the following 297-residue polypeptide: Nitrogenase iron protein 2 (297 aa).

14 to 21 provides a ligand contact to ATP; sequence GKGGIGKS. Cys-102 is a binding site for [4Fe-4S] cluster. ADP-ribosylarginine; by dinitrogenase reductase ADP-ribosyltransferase is present on Arg-105. Residue Cys-136 participates in [4Fe-4S] cluster binding.

This sequence belongs to the NifH/BchL/ChlL family. In terms of assembly, homodimer. Requires [4Fe-4S] cluster as cofactor. In terms of processing, the reversible ADP-ribosylation of Arg-105 inactivates the nitrogenase reductase and regulates nitrogenase activity.

It carries out the reaction N2 + 8 reduced [2Fe-2S]-[ferredoxin] + 16 ATP + 16 H2O = H2 + 8 oxidized [2Fe-2S]-[ferredoxin] + 2 NH4(+) + 16 ADP + 16 phosphate + 6 H(+). The key enzymatic reactions in nitrogen fixation are catalyzed by the nitrogenase complex, which has 2 components: the iron protein and the molybdenum-iron protein. The polypeptide is Nitrogenase iron protein 2 (nifH2) (Nostoc sp. (strain PCC 7120 / SAG 25.82 / UTEX 2576)).